Consider the following 100-residue polypeptide: Chorion class A protein M2774 (100 aa).

Residues 1-33 (GGGWNGWNGLGGGWNGLGVGWSRLDGGYGGGCG) form a left arm region. The tract at residues 34 to 81 (SYGGEGIGNVGVADELPVGGVTAVGGRVPIIGGVEYGGPARAAGAVSI) is central domain. Positions 82 to 100 (CGHCAPTCGCGRAGLGGYY) are right arm.

It belongs to the chorion protein family.

Its function is as follows. This protein is one of many from the eggshell of the silk moth. The polypeptide is Chorion class A protein M2774 (Bombyx mori (Silk moth)).